The primary structure comprises 226 residues: MNVLEQLMTYYAQNGSYVMDEFGRHFLMSAYGVLFAAVVGVPAGILIAHFRRLSAWVFAVTNVIQTIPALAMLAVLMLVMGLGANTVILSLFLYSLLPIIRNTYTGIISIEHAYLESGKAMGMTKFQVLRMVELPLALSVIMAGLRTALVIAIGITAIGTFVGAGGLGDMIVRGSNATNGTAIILAGAIPTAVMAVGADLLMAWLERALSPVKKKRTGAKHVQSAA.

The ABC transmembrane type-1 domain maps to Phe22–Met202. 5 consecutive transmembrane segments (helical) span residues Leu27 to Ile47, Arg52 to Met72, Leu73 to Leu93, Ala148 to Gly168, and Ala182 to Met202.

Belongs to the binding-protein-dependent transport system permease family. CysTW subfamily.

Its subcellular location is the cell membrane. Its function is as follows. Involved in a high affinity multicomponent binding-protein-dependent transport system for choline; probably responsible for the translocation of the substrate across the membrane. The protein is Choline transport system permease protein OpuBD (opuBD) of Bacillus subtilis (strain 168).